Reading from the N-terminus, the 151-residue chain is Ribonuclease H (151 aa).

An RNase H type-1 domain is found at 2-143 (SDDWVEIYTD…ADLLANRGVV (142 aa)). Mg(2+) is bound by residues Asp-11, Glu-49, Asp-71, and Asp-135.

Belongs to the RNase H family. Monomer. The cofactor is Mg(2+).

The protein localises to the cytoplasm. It carries out the reaction Endonucleolytic cleavage to 5'-phosphomonoester.. In terms of biological role, endonuclease that specifically degrades the RNA of RNA-DNA hybrids. In Stutzerimonas stutzeri (strain A1501) (Pseudomonas stutzeri), this protein is Ribonuclease H.